A 440-amino-acid polypeptide reads, in one-letter code: Phosphatidylglycerol--prolipoprotein diacylglyceryl transferase (440 aa).

4 helical membrane-spanning segments follow: residues 21 to 41 (VPIR…LLIG), 53 to 73 (GVIY…GRLY), 96 to 116 (IWDG…GAWI), and 122 to 142 (GIPL…AQAI). A 1,2-diacyl-sn-glycero-3-phospho-(1'-sn-glycerol) is bound at residue arginine 144. A run of 2 helical transmembrane segments spans residues 189–209 (VALV…LIFV) and 256–276 (INSF…MAAP). A disordered region spans residues 280 to 440 (EDPESLRGNQ…ARLRDRLSGR (161 aa)). A compositionally biased stretch (low complexity) spans 299 to 330 (EPATVAATTEAATEGVAAPADGAEAAGADATA). Residues 332–346 (RPEESAEPDVEKPES) show a composition bias toward basic and acidic residues. The segment covering 347-417 (EETEAEAAEE…PEQPVAEEPE (71 aa)) has biased composition (acidic residues). Over residues 424-440 (ETKRRWGARLRDRLSGR) the composition is skewed to basic and acidic residues.

Belongs to the Lgt family.

It is found in the cell membrane. The enzyme catalyses L-cysteinyl-[prolipoprotein] + a 1,2-diacyl-sn-glycero-3-phospho-(1'-sn-glycerol) = an S-1,2-diacyl-sn-glyceryl-L-cysteinyl-[prolipoprotein] + sn-glycerol 1-phosphate + H(+). It participates in protein modification; lipoprotein biosynthesis (diacylglyceryl transfer). Catalyzes the transfer of the diacylglyceryl group from phosphatidylglycerol to the sulfhydryl group of the N-terminal cysteine of a prolipoprotein, the first step in the formation of mature lipoproteins. The polypeptide is Phosphatidylglycerol--prolipoprotein diacylglyceryl transferase (Mycobacterium avium (strain 104)).